Here is a 116-residue protein sequence, read N- to C-terminus: Tyrosine-protein phosphatase 14 (116 aa).

One can recognise a Tyrosine-protein phosphatase domain in the interval 1-116 (WRMITQEKAQ…SLKNPGPVIV (116 aa)). Substrate is bound at residue Asp-84.

It belongs to the protein-tyrosine phosphatase family.

It catalyses the reaction O-phospho-L-tyrosyl-[protein] + H2O = L-tyrosyl-[protein] + phosphate. The chain is Tyrosine-protein phosphatase 14 (STY-14) from Styela plicata (Wrinkled sea squirt).